We begin with the raw amino-acid sequence, 786 residues long: Endonuclease MutS2 (786 aa).

332–339 serves as a coordination point for ATP; that stretch reads GPNTGGKT. One can recognise a Smr domain in the interval 711 to 786; that stretch reads IDLRGMDSEE…GTGVTVVILK (76 aa).

The protein belongs to the DNA mismatch repair MutS family. MutS2 subfamily. In terms of assembly, homodimer. Binds to stalled ribosomes, contacting rRNA.

Its function is as follows. Endonuclease that is involved in the suppression of homologous recombination and thus may have a key role in the control of bacterial genetic diversity. Acts as a ribosome collision sensor, splitting the ribosome into its 2 subunits. Detects stalled/collided 70S ribosomes which it binds and splits by an ATP-hydrolysis driven conformational change. Acts upstream of the ribosome quality control system (RQC), a ribosome-associated complex that mediates the extraction of incompletely synthesized nascent chains from stalled ribosomes and their subsequent degradation. Probably generates substrates for RQC. The sequence is that of Endonuclease MutS2 from Clostridium perfringens (strain 13 / Type A).